The chain runs to 610 residues: Mitochondrial import receptor subunit TOM70 (610 aa).

Residue Ala-2 is modified to N-acetylalanine. Over 2–41 the chain is Mitochondrial intermembrane; sequence AASKPVEAAMAAAAAPASGNGVGSSGGTAAPGSGAGTLPR. The helical transmembrane segment at 42-62 threads the bilayer; it reads WHVALAIGAPLLLGAGAMYLW. Residues 63 to 610 lie on the Cytoplasmic side of the membrane; it reads SRRRRRREAG…KKYGLKPPTL (548 aa). The disordered stretch occupies residues 69-109; that stretch reads REAGGRGDASGLKRNSERKTPEGRASPALGSGPDGSGDSLE. Arg-74 bears the Omega-N-methylarginine mark. Low complexity predominate over residues 93–108; that stretch reads ASPALGSGPDGSGDSL. A phosphoserine mark is found at Ser-94, Ser-99, Ser-104, Ser-107, and Ser-112. 2 TPR repeats span residues 116 to 149 and 155 to 188; these read AQAA…CPTE and STFY…NPKY. Residue Lys-187 is modified to N6-acetyllysine. Lys-277 is covalently cross-linked (Glycyl lysine isopeptide (Lys-Gly) (interchain with G-Cter in SUMO2)). TPR repeat units follow at residues 296–329, 331–364, 369–402, 403–436, 444–477, 478–511, 513–546, and 547–580; these read ENSG…QGKY, AEAL…KEAN, ANAL…DPMN, SDVY…RPKF, CFAL…FPRC, AEGY…EPDN, TTYV…DNKC, and DFAY…AKSE.

It belongs to the Tom70 family. Forms part of the preprotein translocase complex of the outer mitochondrial membrane (TOM complex) which consists of at least 7 different proteins (TOMM5, TOMM6, TOMM7, TOMM20, TOMM22, TOMM40 and TOMM70). Interacts with CAPN8. Interacts with TRADD, TRAF6 and STING. Interacts with MAVS. Interacts with HSPA8 and HSP90AA1; both interactions are required for preprotein mitochondrial import. The interaction with HSP90AA1 is direct and mediates the association of TOMM70 with IRF3 and TBK1. Upon mitochondrial depolarization, interacts with PINK1; the interaction is required for PINK1-TOM-TIM23 supercomplex formation which is critical for PINK1 stabilization at the outer mitochondrial membrane, kinase activation and downstream mitophagy.

The protein localises to the mitochondrion outer membrane. Its function is as follows. Acts as a receptor of the preprotein translocase complex of the outer mitochondrial membrane (TOM complex). Recognizes and mediates the translocation of mitochondrial preproteins from the cytosol into the mitochondria in a chaperone dependent manner. Mediates TBK1 and IRF3 activation induced by MAVS in response to Sendai virus infection and promotes host antiviral responses during virus infection. This chain is Mitochondrial import receptor subunit TOM70, found in Rattus norvegicus (Rat).